The primary structure comprises 60 residues: Large ribosomal subunit protein bL32 (60 aa).

The tract at residues 1 to 23 (MAVPKRKKSKSRRNMHRSHHAIK) is disordered.

Belongs to the bacterial ribosomal protein bL32 family.

This Wolbachia pipientis subsp. Culex pipiens (strain wPip) protein is Large ribosomal subunit protein bL32.